A 464-amino-acid chain; its full sequence is Soluble pyridine nucleotide transhydrogenase (464 aa).

35-44 contacts FAD; that stretch reads EASSQVGGSC.

The protein belongs to the class-I pyridine nucleotide-disulfide oxidoreductase family. FAD serves as cofactor.

It is found in the cytoplasm. The catalysed reaction is NAD(+) + NADPH = NADH + NADP(+). Functionally, conversion of NADPH, generated by peripheral catabolic pathways, to NADH, which can enter the respiratory chain for energy generation. The polypeptide is Soluble pyridine nucleotide transhydrogenase (Marinomonas sp. (strain MWYL1)).